A 407-amino-acid chain; its full sequence is Argininosuccinate synthase (407 aa).

ATP contacts are provided by residues 13–21 (AYSGGLDTS) and A40. L-citrulline contacts are provided by Y91 and S96. G121 provides a ligand contact to ATP. L-aspartate contacts are provided by T123, N127, and D128. L-citrulline is bound at residue N127. L-citrulline-binding residues include R131, S182, S191, E267, and Y279.

The protein belongs to the argininosuccinate synthase family. Type 1 subfamily. As to quaternary structure, homotetramer.

It localises to the cytoplasm. It catalyses the reaction L-citrulline + L-aspartate + ATP = 2-(N(omega)-L-arginino)succinate + AMP + diphosphate + H(+). The protein operates within amino-acid biosynthesis; L-arginine biosynthesis; L-arginine from L-ornithine and carbamoyl phosphate: step 2/3. This is Argininosuccinate synthase from Bartonella bacilliformis (strain ATCC 35685 / KC583 / Herrer 020/F12,63).